Reading from the N-terminus, the 351-residue chain is Cyanuric acid amidohydrolase (351 aa).

The segment at 1–96 (MPSLRAHVFR…HWTVFARETV (96 aa)) is RU A. Substrate is bound by residues arginine 53 and 77-78 (SG). Positions 103-240 (ALAIGVSRTP…HEIIVLGMSA (138 aa)) are RU B. The active site involves lysine 153. Substrate is bound by residues arginine 185 and 223 to 224 (SS). The active-site Nucleophile is the serine 223. The interval 246-351 (LSIDHAVMRD…PVAIIVEKEQ (106 aa)) is RU C. Glutamate 283 contributes to the Mg(2+) binding site. Residues arginine 310 and 329–330 (SG) contribute to the substrate site. Alanine 332, glutamine 335, glycine 336, proline 337, and glycine 340 together coordinate Mg(2+).

This sequence belongs to the cyclic amide hydrolase (CyAH) family. Homotetramer.

It carries out the reaction cyanurate + H2O = 1-carboxybiuret + H(+). It participates in xenobiotic degradation; atrazine degradation; biuret from cyanurate: step 1/1. Inhibited by barbituric acid. Responsible for the hydrolysis of cyanuric acid, an intermediate formed during catabolism of s-triazine based compounds in herbicides such as atrazine and polymers such as melamine. Catalyzes the hydrolytic opening of the s-triazine ring of cyanuric acid (2,4,6-trihydroxy-s-triazine) to yield carbon dioxide and carboxybiuret, which spontaneously decarboxylates to biuret. This chain is Cyanuric acid amidohydrolase, found in Rhizobium johnstonii (strain DSM 114642 / LMG 32736 / 3841) (Rhizobium leguminosarum bv. viciae).